A 168-amino-acid polypeptide reads, in one-letter code: Nucleoside deoxyribosyltransferase (168 aa).

The Nucleophile role is filled by E103.

Belongs to the nucleoside deoxyribosyltransferase family.

It catalyses the reaction 2-deoxy-D-ribosyl-base(1) + base(2) = 2-deoxy-D-ribosyl-base(2) + base(1).. Its pathway is nucleotide metabolism; nucleotide salvage pathway. Catalyzes the cleavage of the glycosidic bond of 2'-deoxyribonucleosides and the transfer of the deoxyribosyl moiety to an acceptor purine or pyrimidine base. The sequence is that of Nucleoside deoxyribosyltransferase (ntd) from Limosilactobacillus fermentum (Lactobacillus fermentum).